Here is a 366-residue protein sequence, read N- to C-terminus: Ribosomal RNA large subunit methyltransferase M (366 aa).

Residues S188, 221 to 224 (CPGG), D240, D260, and D277 contribute to the S-adenosyl-L-methionine site. The active-site Proton acceptor is the K306.

Belongs to the class I-like SAM-binding methyltransferase superfamily. RNA methyltransferase RlmE family. RlmM subfamily. Monomer.

It localises to the cytoplasm. It catalyses the reaction cytidine(2498) in 23S rRNA + S-adenosyl-L-methionine = 2'-O-methylcytidine(2498) in 23S rRNA + S-adenosyl-L-homocysteine + H(+). In terms of biological role, catalyzes the 2'-O-methylation at nucleotide C2498 in 23S rRNA. This Erwinia tasmaniensis (strain DSM 17950 / CFBP 7177 / CIP 109463 / NCPPB 4357 / Et1/99) protein is Ribosomal RNA large subunit methyltransferase M.